A 433-amino-acid polypeptide reads, in one-letter code: Signal recognition particle 54 kDa protein (433 aa).

GTP contacts are provided by residues 106–113, 186–190, and 244–247; these read GVEGSGKT, DTAGR, and TKMD.

It belongs to the GTP-binding SRP family. SRP54 subfamily. As to quaternary structure, part of the signal recognition particle protein translocation system, which is composed of SRP and FtsY. Archaeal SRP consists of a 7S RNA molecule of 300 nucleotides and two protein subunits: SRP54 and SRP19.

The protein resides in the cytoplasm. It catalyses the reaction GTP + H2O = GDP + phosphate + H(+). Functionally, involved in targeting and insertion of nascent membrane proteins into the cytoplasmic membrane. Binds to the hydrophobic signal sequence of the ribosome-nascent chain (RNC) as it emerges from the ribosomes. The SRP-RNC complex is then targeted to the cytoplasmic membrane where it interacts with the SRP receptor FtsY. This is Signal recognition particle 54 kDa protein from Pyrobaculum aerophilum (strain ATCC 51768 / DSM 7523 / JCM 9630 / CIP 104966 / NBRC 100827 / IM2).